A 565-amino-acid polypeptide reads, in one-letter code: Mediator of RNA polymerase II transcription subunit 17 (565 aa).

Over residues 138-152 (TSLNSDRLGQDSNDN) the composition is skewed to polar residues. The tract at residues 138–160 (TSLNSDRLGQDSNDNQESKATDS) is disordered.

Belongs to the Mediator complex subunit 17 family. As to quaternary structure, component of the Mediator complex.

Its subcellular location is the nucleus. Component of the Mediator complex, a coactivator involved in the regulated transcription of nearly all RNA polymerase II-dependent genes. Mediator functions as a bridge to convey information from gene-specific regulatory proteins to the basal RNA polymerase II transcription machinery. Mediator is recruited to promoters by direct interactions with regulatory proteins and serves as a scaffold for the assembly of a functional preinitiation complex with RNA polymerase II and the general transcription factors. This is Mediator of RNA polymerase II transcription subunit 17 (SRB4) from Candida albicans (strain SC5314 / ATCC MYA-2876) (Yeast).